The primary structure comprises 205 residues: MNSQPLRVGIGGPVGSGKTALTLALCLALRDRYNLAVVTNDIYTREDADFLVRNEALAPERIIGVETGGCPHTAIREDASINLEAVDQLNRRFEGLDLIIVESGGDNLSATFSPELSDLTIYVIDVSAGDKLPRKGGPGICKSDLLVINKIDLAPLVGASLEMMDSDTRRMRGEKPFVFSNQKTGQGLEQIIAFIERQGLLTAAA.

12–19 (GPVGSGKT) contributes to the GTP binding site.

Belongs to the SIMIBI class G3E GTPase family. UreG subfamily. In terms of assembly, homodimer. UreD, UreF and UreG form a complex that acts as a GTP-hydrolysis-dependent molecular chaperone, activating the urease apoprotein by helping to assemble the nickel containing metallocenter of UreC. The UreE protein probably delivers the nickel.

The protein resides in the cytoplasm. In terms of biological role, facilitates the functional incorporation of the urease nickel metallocenter. This process requires GTP hydrolysis, probably effectuated by UreG. The chain is Urease accessory protein UreG from Pseudomonas savastanoi pv. phaseolicola (strain 1448A / Race 6) (Pseudomonas syringae pv. phaseolicola (strain 1448A / Race 6)).